Consider the following 288-residue polypeptide: Glycine--tRNA ligase alpha subunit (288 aa).

Belongs to the class-II aminoacyl-tRNA synthetase family. As to quaternary structure, tetramer of two alpha and two beta subunits.

It localises to the cytoplasm. The catalysed reaction is tRNA(Gly) + glycine + ATP = glycyl-tRNA(Gly) + AMP + diphosphate. This chain is Glycine--tRNA ligase alpha subunit, found in Rickettsia africae (strain ESF-5).